A 200-amino-acid chain; its full sequence is Putative HTH-type transcriptional regulator YhjB (200 aa).

In terms of domain architecture, HTH luxR-type spans 135–200; the sequence is DIKDLKSLSA…QAAMMLNISS (66 aa). The H-T-H motif DNA-binding region spans 159-178; sequence NKEIGRALNISTGTVKAHLE.

This is Putative HTH-type transcriptional regulator YhjB (yhjB) from Escherichia coli (strain K12).